Here is a 545-residue protein sequence, read N- to C-terminus: Chaperonin GroEL 2 (545 aa).

ATP contacts are provided by residues 29–32, 86–90, Gly413, 479–481, and Asp495; these read TLGP, DGTTT, and NAA.

This sequence belongs to the chaperonin (HSP60) family. As to quaternary structure, forms a cylinder of 14 subunits composed of two heptameric rings stacked back-to-back. Interacts with the co-chaperonin GroES.

Its subcellular location is the cytoplasm. The enzyme catalyses ATP + H2O + a folded polypeptide = ADP + phosphate + an unfolded polypeptide.. Its function is as follows. Together with its co-chaperonin GroES, plays an essential role in assisting protein folding. The GroEL-GroES system forms a nano-cage that allows encapsulation of the non-native substrate proteins and provides a physical environment optimized to promote and accelerate protein folding. The polypeptide is Chaperonin GroEL 2 (Prochlorococcus marinus (strain AS9601)).